Reading from the N-terminus, the 230-residue chain is 5'-methylthioadenosine/S-adenosylhomocysteine nucleosidase (230 aa).

Glu-12 acts as the Proton acceptor in catalysis. Residues Gly-78, Met-153, and Met-174–Glu-175 contribute to the substrate site. Asp-198 acts as the Proton donor in catalysis.

Belongs to the PNP/UDP phosphorylase family. MtnN subfamily.

It catalyses the reaction S-adenosyl-L-homocysteine + H2O = S-(5-deoxy-D-ribos-5-yl)-L-homocysteine + adenine. The enzyme catalyses S-methyl-5'-thioadenosine + H2O = 5-(methylsulfanyl)-D-ribose + adenine. The catalysed reaction is 5'-deoxyadenosine + H2O = 5-deoxy-D-ribose + adenine. The protein operates within amino-acid biosynthesis; L-methionine biosynthesis via salvage pathway; S-methyl-5-thio-alpha-D-ribose 1-phosphate from S-methyl-5'-thioadenosine (hydrolase route): step 1/2. Functionally, catalyzes the irreversible cleavage of the glycosidic bond in both 5'-methylthioadenosine (MTA) and S-adenosylhomocysteine (SAH/AdoHcy) to adenine and the corresponding thioribose, 5'-methylthioribose and S-ribosylhomocysteine, respectively. Also cleaves 5'-deoxyadenosine, a toxic by-product of radical S-adenosylmethionine (SAM) enzymes, into 5-deoxyribose and adenine. This is 5'-methylthioadenosine/S-adenosylhomocysteine nucleosidase from Lysinibacillus sphaericus (strain C3-41).